The sequence spans 487 residues: 6-phosphogluconate dehydrogenase, decarboxylating 3, chloroplastic (487 aa).

M1 bears the N-acetylmethionine mark. NADP(+) is bound by residues 13–18 (GLAVMG), 36–38 (NRT), 80–82 (VKA), and N108. Substrate contacts are provided by residues N108 and 134–136 (SGG). Residue K188 is the Proton acceptor of the active site. Residue 191–192 (HN) participates in substrate binding. E195 serves as the catalytic Proton donor. Residues Y196, K266, R293, R458, and H464 each contribute to the substrate site.

It belongs to the 6-phosphogluconate dehydrogenase family. Forms homodimer. Forms heterodimers with PGD1 or PGD2.

Its subcellular location is the plastid. The protein localises to the chloroplast. It is found in the cytoplasm. It localises to the cytosol. It catalyses the reaction 6-phospho-D-gluconate + NADP(+) = D-ribulose 5-phosphate + CO2 + NADPH. It functions in the pathway carbohydrate degradation; pentose phosphate pathway; D-ribulose 5-phosphate from D-glucose 6-phosphate (oxidative stage): step 3/3. Its function is as follows. Catalyzes the oxidative decarboxylation of 6-phosphogluconate to ribulose 5-phosphate and CO(2), with concomitant reduction of NADP to NADPH. In Arabidopsis thaliana (Mouse-ear cress), this protein is 6-phosphogluconate dehydrogenase, decarboxylating 3, chloroplastic.